The primary structure comprises 357 residues: DNA replication and repair protein RecF (357 aa).

Residue 30–37 participates in ATP binding; sequence GANGSGKT.

Belongs to the RecF family.

The protein resides in the cytoplasm. The RecF protein is involved in DNA metabolism; it is required for DNA replication and normal SOS inducibility. RecF binds preferentially to single-stranded, linear DNA. It also seems to bind ATP. This is DNA replication and repair protein RecF from Escherichia coli O139:H28 (strain E24377A / ETEC).